We begin with the raw amino-acid sequence, 222 residues long: NAD(P)H-hydrate epimerase (222 aa).

In terms of domain architecture, YjeF N-terminal spans 9–209 (MQQIDSYTIE…DIGLRLPEDF (201 aa)). 57–61 (NNGAD) contributes to the (6S)-NADPHX binding site. Positions 58 and 119 each coordinate K(+). Residues 123 to 129 (GVGLNNT) and aspartate 152 each bind (6S)-NADPHX. Threonine 155 contributes to the K(+) binding site.

This sequence belongs to the NnrE/AIBP family. K(+) is required as a cofactor.

It catalyses the reaction (6R)-NADHX = (6S)-NADHX. The enzyme catalyses (6R)-NADPHX = (6S)-NADPHX. In terms of biological role, catalyzes the epimerization of the S- and R-forms of NAD(P)HX, a damaged form of NAD(P)H that is a result of enzymatic or heat-dependent hydration. This is a prerequisite for the S-specific NAD(P)H-hydrate dehydratase to allow the repair of both epimers of NAD(P)HX. The sequence is that of NAD(P)H-hydrate epimerase from Leuconostoc citreum (strain KM20).